A 360-amino-acid chain; its full sequence is sn-glycerol-3-phosphate import ATP-binding protein UgpC (360 aa).

The ABC transporter domain occupies 4–235; it reads LSLKGVRKSY…PATTFVASFI (232 aa). 37–44 provides a ligand contact to ATP; it reads GPSGCGKS.

Belongs to the ABC transporter superfamily. sn-glycerol-3-phosphate importer (TC 3.A.1.1.3) family. In terms of assembly, the complex is composed of two ATP-binding proteins (UgpC), two transmembrane proteins (UgpA and UgpE) and a solute-binding protein (UgpB).

It localises to the cell inner membrane. The enzyme catalyses sn-glycerol 3-phosphate(out) + ATP + H2O = sn-glycerol 3-phosphate(in) + ADP + phosphate + H(+). Functionally, part of the ABC transporter complex UgpBAEC involved in sn-glycerol-3-phosphate (G3P) import. Responsible for energy coupling to the transport system. The protein is sn-glycerol-3-phosphate import ATP-binding protein UgpC of Burkholderia pseudomallei (strain K96243).